The primary structure comprises 313 residues: Pyrimidine-specific ribonucleoside hydrolase RihA (313 aa).

H240 is an active-site residue.

Belongs to the IUNH family. RihA subfamily.

Functionally, hydrolyzes cytidine or uridine to ribose and cytosine or uracil, respectively. This is Pyrimidine-specific ribonucleoside hydrolase RihA from Enterobacter sp. (strain 638).